The following is a 127-amino-acid chain: Mitochondrial pyruvate carrier 2 (127 aa).

Residues 2–40 (SAAGARGLRATYHRLLDKVELMLPEKLRPLYNHPAGPRT) lie on the Mitochondrial matrix side of the membrane. A helical transmembrane segment spans residues 41–61 (VFFWAPIMKRGLVCAGLADMA). Residues 62 to 72 (RPAEKLSTAQS) are Mitochondrial intermembrane-facing. A helical membrane pass occupies residues 73–90 (AVLMATGFIWSRYSLVII). The Mitochondrial matrix portion of the chain corresponds to 91–95 (PKNWS). The chain crosses the membrane as a helical span at residues 96–115 (LFAVNFFVGAAGASQLFRIW). Residues 116 to 127 (RYNQELKAKAHK) are Mitochondrial intermembrane-facing.

Belongs to the mitochondrial pyruvate carrier (MPC) (TC 2.A.105) family. In terms of assembly, homodimer. Homooligomer. Forms heterodimers with MPC1 and MPC1L. The heterodimer is the more stable and dominant form.

The protein resides in the mitochondrion inner membrane. It catalyses the reaction pyruvate(out) + H(+)(out) = pyruvate(in) + H(+)(in). In terms of biological role, mediates the uptake of pyruvate into mitochondria. The sequence is that of Mitochondrial pyruvate carrier 2 (MPC2) from Pongo abelii (Sumatran orangutan).